The sequence spans 227 residues: Cytochrome c oxidase subunit 2 (227 aa).

The Mitochondrial intermembrane portion of the chain corresponds to 1-26 (MNTWMNFNLQNSNSPLMEQLMFFHNH). The chain crosses the membrane as a helical span at residues 27–48 (SMLIILLITILVGYIMSSLLYN). Over 49–62 (KLYNRYLLESQNVE) the chain is Mitochondrial matrix. The chain crosses the membrane as a helical span at residues 63–82 (IIWTILPAFMLIFIALPSLR). Residues 83–227 (LLYLLDDSNS…SFIKWISSNS (145 aa)) lie on the Mitochondrial intermembrane side of the membrane. 6 residues coordinate Cu cation: histidine 161, cysteine 196, glutamate 198, cysteine 200, histidine 204, and methionine 207. Residue glutamate 198 coordinates Mg(2+).

The protein belongs to the cytochrome c oxidase subunit 2 family. In terms of assembly, component of the cytochrome c oxidase (complex IV, CIV), a multisubunit enzyme composed of a catalytic core of 3 subunits and several supernumerary subunits. The complex exists as a monomer or a dimer and forms supercomplexes (SCs) in the inner mitochondrial membrane with ubiquinol-cytochrome c oxidoreductase (cytochrome b-c1 complex, complex III, CIII). Cu cation is required as a cofactor.

The protein localises to the mitochondrion inner membrane. It carries out the reaction 4 Fe(II)-[cytochrome c] + O2 + 8 H(+)(in) = 4 Fe(III)-[cytochrome c] + 2 H2O + 4 H(+)(out). In terms of biological role, component of the cytochrome c oxidase, the last enzyme in the mitochondrial electron transport chain which drives oxidative phosphorylation. The respiratory chain contains 3 multisubunit complexes succinate dehydrogenase (complex II, CII), ubiquinol-cytochrome c oxidoreductase (cytochrome b-c1 complex, complex III, CIII) and cytochrome c oxidase (complex IV, CIV), that cooperate to transfer electrons derived from NADH and succinate to molecular oxygen, creating an electrochemical gradient over the inner membrane that drives transmembrane transport and the ATP synthase. Cytochrome c oxidase is the component of the respiratory chain that catalyzes the reduction of oxygen to water. Electrons originating from reduced cytochrome c in the intermembrane space (IMS) are transferred via the dinuclear copper A center (CU(A)) of subunit 2 and heme A of subunit 1 to the active site in subunit 1, a binuclear center (BNC) formed by heme A3 and copper B (CU(B)). The BNC reduces molecular oxygen to 2 water molecules using 4 electrons from cytochrome c in the IMS and 4 protons from the mitochondrial matrix. This Ctenocephalides felis (Cat flea) protein is Cytochrome c oxidase subunit 2 (COII).